The chain runs to 662 residues: Probable lysophospholipase 3 (662 aa).

The signal sequence occupies residues 1-19; it reads MLFNCFGILALLQILPALA. Asparagine 74, asparagine 127, asparagine 162, asparagine 196, asparagine 266, asparagine 274, asparagine 303, asparagine 376, asparagine 406, asparagine 411, asparagine 483, asparagine 518, asparagine 523, asparagine 547, asparagine 556, asparagine 574, asparagine 596, and asparagine 613 each carry an N-linked (GlcNAc...) asparagine glycan. Residues 76–617 enclose the PLA2c domain; the sequence is TCPSDYMLRP…EQYCWNGTTV (542 aa).

Belongs to the lysophospholipase family.

It localises to the secreted. The enzyme catalyses a 1-acyl-sn-glycero-3-phosphocholine + H2O = sn-glycerol 3-phosphocholine + a fatty acid + H(+). Catalyzes the release of fatty acids from lysophospholipids. This Schizosaccharomyces pombe (strain 972 / ATCC 24843) (Fission yeast) protein is Probable lysophospholipase 3 (plb3).